The sequence spans 67 residues: Peptide Hp1036 (67 aa).

The first 23 residues, 1-23, serve as a signal peptide directing secretion; sequence MKTQFAILLITLVLFQMFSQSDA. Phe36 is modified (phenylalanine amide). Residues 40 to 67 constitute a propeptide that is removed on maturation; it reads GLNDLSDLDELFDGEISEADVDFLREIM.

The protein belongs to the non-disulfide-bridged peptide (NDBP) superfamily. Short antimicrobial peptide (group 4) family. As to expression, expressed by the venom gland.

The protein localises to the secreted. The protein resides in the target cell membrane. In terms of biological role, amphipathic peptide with antibacterial activities. Shows antiviral activities against the herpes simplex virus type-1. It potently inhibits the initial infection by provoking the rupture of viral envelop and the dissociation of proteins from the virions (EC(50) is 0.43 uM). It also effectively inhibits viral attachment (EC(50) is 2.87 uM), viral entry (EC(50) is 4.29 uM) and viral proliferation after infection (EC(50) is 7.86). Morever, it enters mammalian tested cells (Vero) and reduces the intracellular infectivity. The chain is Peptide Hp1036 from Heterometrus petersii (Asian forest scorpion).